The following is a 212-amino-acid chain: Cytidylate kinase (212 aa).

Gly-7–Thr-15 provides a ligand contact to ATP.

Belongs to the cytidylate kinase family. Type 1 subfamily.

It localises to the cytoplasm. It carries out the reaction CMP + ATP = CDP + ADP. The enzyme catalyses dCMP + ATP = dCDP + ADP. In Rhodopseudomonas palustris (strain TIE-1), this protein is Cytidylate kinase.